The sequence spans 622 residues: Palmitoyltransferase ZDHHC17 (622 aa).

The Cytoplasmic portion of the chain corresponds to 1–294; it reads MADGPDEYDT…LKADKEFRQK (294 aa). The necessary and sufficient for interaction with DNAJC5 and SNAP25 stretch occupies residues 1 to 295; the sequence is MADGPDEYDT…KADKEFRQKV (295 aa). ANK repeat units lie at residues 41–76, 79–108, 113–142, 146–175, 179–209, 214–243, and 247–276; these read THVDDYSTWDIVKATQYGIYERCRELVEAGYDVRQP, ENVTLLHWAAINNRIDLVKYYISKGAIVDQ, LNSTPLHWATRQGHLSMVVQLMKYGADPSL, EGCSCIHLAAQFGHTSIVAYLIAKGQDVDM, NGMTPLMWAAYRTHSVDPTRLLLTFNVSVNL, HKNTALHWAVLAGNTTVISLLLEAGGNVDA, and KGESALDLAKQRKNVWMINHLQEARQAKGY. 2 helical membrane-spanning segments follow: residues 295-315 and 316-336; these read VMLGTPFLVIWLVGFIADLNI and DSWLIKGLMYGGVWATVQFLS. The Lumenal portion of the chain corresponds to 337–347; sequence KSFFDHSMHSA. A helical membrane pass occupies residues 348-368; sequence LPLGIYLATKFWMYVTWFFWF. The Cytoplasmic segment spans residues 369–371; it reads WND. The helical transmembrane segment at 372 to 392 threads the bilayer; it reads LSFLSIHLPFLANSVALFYNF. Residues 393–470 lie on the Lumenal side of the membrane; it reads GKSWKSDPGI…GNCVGAGNHR (78 aa). Residues 427–477 enclose the DHHC domain; the sequence is IFCSTCLIRKPVRSKHCGVCNRCIAKFDHHCPWVGNCVGAGNHRYFMGYLF. Cysteine 457 acts as the S-palmitoyl cysteine intermediate in catalysis. A helical transmembrane segment spans residues 471 to 491; that stretch reads YFMGYLFFLLFMICWMIYGCV. Topologically, residues 492–506 are cytoplasmic; sequence SYWGLHCETTYTKDG. The chain crosses the membrane as a helical span at residues 507 to 526; sequence FWTYITQIATCSPWMFWMFL. Residues 527–529 lie on the Lumenal side of the membrane; that stretch reads NSV. The helical transmembrane segment at 530–552 threads the bilayer; that stretch reads FHFMWVAVLLMCQMYQITCLGIT. Topologically, residues 553 to 622 are cytoplasmic; the sequence is TNERMNARRY…QISGSGYQLV (70 aa).

This sequence belongs to the DHHC palmitoyltransferase family. AKR/ZDHHC17 subfamily. As to quaternary structure, interacts (via ANK repeats) with numerous proteins (via the consensus sequence motif [VIAP]-[VIT]-x-x-Q-P). Interacts (via ANK repeats) with CLIP3. Interacts (via ANK repeats) with HTT. Interacts (via ANK repeats) with DNAJC5 (via C-terminus). Interacts (via ANK repeats) with MAP6. Interacts (via ANK repeats) with SNAP23. Interacts (via ANK repeats) with SNAP25. Interacts (via ANK repeats) with EVL. Interacts with SPRED1 and SPRED3. Interacts with GPM6A and OPTN. May interact (via ANK repeats) with SPRED2. May interact with NTRK1; may regulate its localization and function. In terms of processing, autopalmitoylated. Autopalmitoylation has a regulatory role in ZDHHC17-mediated Mg(2+) transport.

It is found in the golgi apparatus membrane. The protein resides in the cytoplasmic vesicle membrane. The protein localises to the presynaptic cell membrane. The catalysed reaction is L-cysteinyl-[protein] + hexadecanoyl-CoA = S-hexadecanoyl-L-cysteinyl-[protein] + CoA. It carries out the reaction L-cysteinyl-[protein] + tetradecanoyl-CoA = S-tetradecanoyl-L-cysteinyl-[protein] + CoA. The enzyme catalyses L-cysteinyl-[protein] + octadecanoyl-CoA = S-octadecanoyl-L-cysteinyl-[protein] + CoA. Palmitoyltransferase that catalyzes the addition of palmitate onto various protein substrates and is involved in a variety of cellular processes. Has no stringent fatty acid selectivity and in addition to palmitate can also transfer onto target proteins myristate from tetradecanoyl-CoA and stearate from octadecanoyl-CoA. Palmitoyltransferase specific for a subset of neuronal proteins, including SNAP25, DLG4/PSD95, GAD2, SYT1 and HTT. Also palmitoylates neuronal protein GPM6A as well as SPRED1 and SPRED3. Could also play a role in axonogenesis through the regulation of NTRK1 and the downstream ERK1/ERK2 signaling cascade. May be involved in the sorting or targeting of critical proteins involved in the initiating events of endocytosis at the plasma membrane. May play a role in Mg(2+) transport. Could also palmitoylate DNAJC5 and regulate its localization to the Golgi membrane. Palmitoylates CASP6, thereby preventing its dimerization and subsequent activation. The chain is Palmitoyltransferase ZDHHC17 from Rattus norvegicus (Rat).